Consider the following 141-residue polypeptide: Flagellar assembly factor FliW 1 (141 aa).

It belongs to the FliW family. In terms of assembly, interacts with translational regulator CsrA and flagellin(s).

The protein resides in the cytoplasm. In terms of biological role, acts as an anti-CsrA protein, binds CsrA and prevents it from repressing translation of its target genes, one of which is flagellin. Binds to flagellin and participates in the assembly of the flagellum. In Desulfotalea psychrophila (strain LSv54 / DSM 12343), this protein is Flagellar assembly factor FliW 1.